Here is a 177-residue protein sequence, read N- to C-terminus: Transcription termination/antitermination protein NusG (177 aa).

Residues Glu-128–Val-156 form the KOW domain.

The protein belongs to the NusG family.

In terms of biological role, participates in transcription elongation, termination and antitermination. Stimulates RNA polymerase pausing at U107 and U144 in the trp leader. NusG-stimulated pausing is sequence specific. Does not affect trp leader termination. This Bacillus subtilis (strain 168) protein is Transcription termination/antitermination protein NusG.